Here is a 205-residue protein sequence, read N- to C-terminus: Glycerol-3-phosphate acyltransferase (205 aa).

The Periplasmic portion of the chain corresponds to 1-3; that stretch reads MSA. A helical transmembrane segment spans residues 4–24; it reads IAPGMILFAYLCGSISSAILV. Residues 25 to 52 are Cytoplasmic-facing; that stretch reads CRIAGLPDPRESGSGNPGATNVLRIGGK. The chain crosses the membrane as a helical span at residues 53–73; that stretch reads GAAVAVLIFDILKGMLPVWGA. Residues 74 to 80 are Periplasmic-facing; that stretch reads YALGITP. A helical membrane pass occupies residues 81 to 101; that stretch reads FWLGLIAIAACLGHIWPVFFG. The Cytoplasmic portion of the chain corresponds to 102–111; that stretch reads FKGGKGVATA. A helical transmembrane segment spans residues 112-132; sequence FGAIAPIGWDLTGVIAGTWLL. At 133–137 the chain is on the periplasmic side; that stretch reads TVLLS. Residues 138 to 158 form a helical membrane-spanning segment; sequence GYSSLGAIVSALIAPFYVWWF. Over 159-205 the chain is Cytoplasmic; that stretch reads KPQFTFPVSMLSCLILLRHHDNIQRLWRRQETKIWTKLKKKREKESK.

It belongs to the PlsY family. Probably interacts with PlsX.

It localises to the cell inner membrane. It catalyses the reaction sn-glycerol 3-phosphate + an acyl-CoA = a 1-acyl-sn-glycero-3-phosphate + CoA. The catalysed reaction is a fatty acyl-[ACP] + sn-glycerol 3-phosphate = a 1-acyl-sn-glycero-3-phosphate + holo-[ACP]. It participates in lipid metabolism; phospholipid metabolism. Catalyzes the transfer of an acyl group from acyl-ACP to glycerol-3-phosphate (G3P) to form lysophosphatidic acid (LPA). This enzyme can also utilize acyl-CoA as fatty acyl donor, but not acyl-PO(4). In Salmonella arizonae (strain ATCC BAA-731 / CDC346-86 / RSK2980), this protein is Glycerol-3-phosphate acyltransferase.